The chain runs to 340 residues: Phosphate acyltransferase (340 aa).

Belongs to the PlsX family. As to quaternary structure, homodimer. Probably interacts with PlsY.

It is found in the cytoplasm. The catalysed reaction is a fatty acyl-[ACP] + phosphate = an acyl phosphate + holo-[ACP]. It functions in the pathway lipid metabolism; phospholipid metabolism. In terms of biological role, catalyzes the reversible formation of acyl-phosphate (acyl-PO(4)) from acyl-[acyl-carrier-protein] (acyl-ACP). This enzyme utilizes acyl-ACP as fatty acyl donor, but not acyl-CoA. The protein is Phosphate acyltransferase of Pseudomonas syringae pv. syringae (strain B728a).